A 150-amino-acid polypeptide reads, in one-letter code: Small ribosomal subunit protein eS19 (150 aa).

This sequence belongs to the eukaryotic ribosomal protein eS19 family. Part of the 30S ribosomal subunit.

Its function is as follows. May be involved in maturation of the 30S ribosomal subunit. The chain is Small ribosomal subunit protein eS19 (rps19e) from Pyrococcus abyssi (strain GE5 / Orsay).